We begin with the raw amino-acid sequence, 316 residues long: Ribosomal RNA small subunit methyltransferase H (316 aa).

Residues 35 to 37 (GGH), D55, F79, D101, and Q108 contribute to the S-adenosyl-L-methionine site.

This sequence belongs to the methyltransferase superfamily. RsmH family.

It localises to the cytoplasm. The enzyme catalyses cytidine(1402) in 16S rRNA + S-adenosyl-L-methionine = N(4)-methylcytidine(1402) in 16S rRNA + S-adenosyl-L-homocysteine + H(+). Functionally, specifically methylates the N4 position of cytidine in position 1402 (C1402) of 16S rRNA. This is Ribosomal RNA small subunit methyltransferase H from Aliivibrio fischeri (strain MJ11) (Vibrio fischeri).